The following is a 567-amino-acid chain: Phenylalanine--tRNA ligase beta subunit (567 aa).

Residues 284–359 (FAVRTKHVSH…RAYDFNDLTP (76 aa)) form the B5 domain. Mg(2+) is bound by residues D337, D343, D346, and D347.

Belongs to the phenylalanyl-tRNA synthetase beta subunit family. Type 2 subfamily. As to quaternary structure, tetramer of two alpha and two beta subunits. It depends on Mg(2+) as a cofactor.

The protein resides in the cytoplasm. It catalyses the reaction tRNA(Phe) + L-phenylalanine + ATP = L-phenylalanyl-tRNA(Phe) + AMP + diphosphate + H(+). This chain is Phenylalanine--tRNA ligase beta subunit, found in Halobacterium salinarum (strain ATCC 29341 / DSM 671 / R1).